A 496-amino-acid polypeptide reads, in one-letter code: L-arabinose isomerase (496 aa).

The Mn(2+) site is built by Glu302, Glu329, His346, and His445.

Belongs to the arabinose isomerase family. Mn(2+) serves as cofactor.

The enzyme catalyses beta-L-arabinopyranose = L-ribulose. The protein operates within carbohydrate degradation; L-arabinose degradation via L-ribulose; D-xylulose 5-phosphate from L-arabinose (bacterial route): step 1/3. Its function is as follows. Catalyzes the conversion of L-arabinose to L-ribulose. The chain is L-arabinose isomerase from Thermotoga neapolitana (strain ATCC 49049 / DSM 4359 / NBRC 107923 / NS-E).